A 397-amino-acid chain; its full sequence is Argininosuccinate synthase (397 aa).

8–16 (AYSGGLDTS) lines the ATP pocket. The L-citrulline site is built by tyrosine 86 and serine 91. ATP is bound at residue glycine 116. Threonine 118, asparagine 122, and aspartate 123 together coordinate L-aspartate. Asparagine 122 is an L-citrulline binding site. The L-citrulline site is built by arginine 126, serine 175, serine 184, glutamate 260, and tyrosine 272.

The protein belongs to the argininosuccinate synthase family. Type 1 subfamily. Homotetramer.

Its subcellular location is the cytoplasm. The catalysed reaction is L-citrulline + L-aspartate + ATP = 2-(N(omega)-L-arginino)succinate + AMP + diphosphate + H(+). The protein operates within amino-acid biosynthesis; L-arginine biosynthesis; L-arginine from L-ornithine and carbamoyl phosphate: step 2/3. The sequence is that of Argininosuccinate synthase from Clostridium botulinum (strain Kyoto / Type A2).